The primary structure comprises 256 residues: Imidazole glycerol phosphate synthase subunit HisF (256 aa).

Catalysis depends on residues aspartate 12 and aspartate 131.

It belongs to the HisA/HisF family. As to quaternary structure, heterodimer of HisH and HisF.

It localises to the cytoplasm. The catalysed reaction is 5-[(5-phospho-1-deoxy-D-ribulos-1-ylimino)methylamino]-1-(5-phospho-beta-D-ribosyl)imidazole-4-carboxamide + L-glutamine = D-erythro-1-(imidazol-4-yl)glycerol 3-phosphate + 5-amino-1-(5-phospho-beta-D-ribosyl)imidazole-4-carboxamide + L-glutamate + H(+). It participates in amino-acid biosynthesis; L-histidine biosynthesis; L-histidine from 5-phospho-alpha-D-ribose 1-diphosphate: step 5/9. In terms of biological role, IGPS catalyzes the conversion of PRFAR and glutamine to IGP, AICAR and glutamate. The HisF subunit catalyzes the cyclization activity that produces IGP and AICAR from PRFAR using the ammonia provided by the HisH subunit. This is Imidazole glycerol phosphate synthase subunit HisF from Pseudomonas fluorescens (strain Pf0-1).